A 256-amino-acid polypeptide reads, in one-letter code: Imidazole glycerol phosphate synthase subunit HisF (256 aa).

Residues aspartate 11 and aspartate 130 contribute to the active site.

Belongs to the HisA/HisF family. Heterodimer of HisH and HisF.

It localises to the cytoplasm. It carries out the reaction 5-[(5-phospho-1-deoxy-D-ribulos-1-ylimino)methylamino]-1-(5-phospho-beta-D-ribosyl)imidazole-4-carboxamide + L-glutamine = D-erythro-1-(imidazol-4-yl)glycerol 3-phosphate + 5-amino-1-(5-phospho-beta-D-ribosyl)imidazole-4-carboxamide + L-glutamate + H(+). Its pathway is amino-acid biosynthesis; L-histidine biosynthesis; L-histidine from 5-phospho-alpha-D-ribose 1-diphosphate: step 5/9. Functionally, IGPS catalyzes the conversion of PRFAR and glutamine to IGP, AICAR and glutamate. The HisF subunit catalyzes the cyclization activity that produces IGP and AICAR from PRFAR using the ammonia provided by the HisH subunit. The protein is Imidazole glycerol phosphate synthase subunit HisF of Synechococcus sp. (strain CC9605).